A 338-amino-acid chain; its full sequence is MSASGLPFDDFRELLRNLPGPDTAALVAARERDGQLTKPPGALGRLEEIAFWLAAWTGRPPAVNRPLVAIFAGNHGVTRQGVTPFPASVTAQMVENFAAGGAAINQICVAHDLGLKVFDLALDYPTGDITEEPALSERDCAATMAFGMEAIAGGTDLLCIGEMGIGNTTIAAAINLGLYGGTAEEWVGPGTGSEGEVLMRKIAAVEKAVALHRDHLSDPLEVMRRLGGREIAAMAGAILAARMQKVPVIIDGYVATAAAAILKAANPAALDHCLIGHVSSEPGHMRAIEKLGKTPLLALGMRLGEGTGAALAAGIVKAAAACHSGMATFAQAGVSNKE.

Glu305 functions as the Proton acceptor in the catalytic mechanism.

This sequence belongs to the CobT family.

The catalysed reaction is 5,6-dimethylbenzimidazole + nicotinate beta-D-ribonucleotide = alpha-ribazole 5'-phosphate + nicotinate + H(+). The protein operates within nucleoside biosynthesis; alpha-ribazole biosynthesis; alpha-ribazole from 5,6-dimethylbenzimidazole: step 1/2. In terms of biological role, catalyzes the synthesis of alpha-ribazole-5'-phosphate from nicotinate mononucleotide (NAMN) and 5,6-dimethylbenzimidazole (DMB). The protein is Nicotinate-nucleotide--dimethylbenzimidazole phosphoribosyltransferase of Rhizobium meliloti (strain 1021) (Ensifer meliloti).